A 321-amino-acid chain; its full sequence is MSRKLRTLMAALCALPLAFAAAPPAHAADPTTMTNGFYADPDSSASRWAAANPGDGRAAAINASIANTPMARWFGSWSGAIGTAAGAYAGAADGRDKLPILVAYNIYNRDYCGGHSAGGAASPSAYADWIARFAGGIAARPAVVILEPDSLGDYGCMNPAQIDEREAMLTNALVQFNRQAPNTWVYMDAGNPRWADAATMARRLHEAGLRQAHGFSLNVSNYITTAENTAYGNAVNNELAARYGYTKPFVVDTSRNGNGSNGEWCNPSGRRIGTPTRTGGGAEMLLWIKTPGESDGNCGVGSGSTAGQFLPEVAYKMIYGY.

The N-terminal stretch at methionine 1–alanine 27 is a signal peptide. Aspartate 110 is a catalytic residue. Cysteines 112 and 156 form a disulfide. The active-site Proton donor is the aspartate 149. Aspartate 295 (nucleophile) is an active-site residue.

This sequence belongs to the glycosyl hydrolase 6 (cellulase B) family.

It catalyses the reaction Endohydrolysis of (1-&gt;4)-beta-D-glucosidic linkages in cellulose, lichenin and cereal beta-D-glucans.. Implicated in the mechanism of induction exerted by cellobiose. The chain is Endoglucanase 1 (celA1) from Streptomyces halstedii.